Here is a 566-residue protein sequence, read N- to C-terminus: Liver carboxylesterase (566 aa).

Positions 1 to 18 (MWLLPLVLTSLASSATWA) are cleaved as a signal peptide. A glycan (N-linked (GlcNAc...) asparagine) is linked at Asn80. Residues Cys88 and Cys117 are joined by a disulfide bond. Ser222 functions as the Acyl-ester intermediate in the catalytic mechanism. A disulfide bridge links Cys274 with Cys285. Glu354 acts as the Charge relay system in catalysis. The residue at position 379 (Ser379) is a Phosphoserine. Catalysis depends on His467, which acts as the Charge relay system. The short motif at 563-566 (HAEL) is the Prevents secretion from ER element.

It belongs to the type-B carboxylesterase/lipase family.

It is found in the endoplasmic reticulum lumen. The enzyme catalyses a carboxylic ester + H2O = an alcohol + a carboxylate + H(+). Its activity is regulated as follows. Activated by CHAPS at concentrations of up to 130 mM, higher concentrations reduce activity. In the presence of CHAPS, activity is stimulated by non-ionic detergents. Inhibited by the esterase inhibitors diisopropylfluorophosphate and phenylmethylsulfonyl fluoride. Functionally, involved in the detoxification of xenobiotics and in the activation of ester and amide prodrugs. Active towards triacylglycerides containing short-chain fatty acids from C2 to C6, and 1(3)-monoacylglycerols containing fatty acids from C2 to C12. Inactive on long-chain triacylglycerols and diacylglycerol. Hydrolyzes aromatic and alkyl esters and vitamin A acetate. The hydrolysis rate depends upon the amino acid promoiety and the esterification site of the prodrug. Aromatic promoieties are favored, highest rates are observed with phenylalanyl progdrugs, hydrolysis of valyl and isoleucyl prodrugs is less efficient. With floxuridine prodrugs, activity is higher on 5' monoesters than on 3' monoesters. With gemcitabine prodrugs, activity is higher on 3' monoesters than on 5' monoesters. This is Liver carboxylesterase from Sus scrofa (Pig).